Reading from the N-terminus, the 159-residue chain is MPLYAVIRIRGTVDVPPDIDKTLYLLRLRRRYTASIYHDSLPGLRDMLRTVEAWTTYGEIEERVLEELLRKRGRIVGDKPLTDKWVEENLGLSGLGELAEKLVSGELHYHRLEEKGVKPFFRLHPPRGGFKKSIKRMFRDGGELGYRGSAINELILKML.

The protein belongs to the universal ribosomal protein uL30 family. In terms of assembly, part of the 50S ribosomal subunit.

The sequence is that of Large ribosomal subunit protein uL30 from Aeropyrum pernix (strain ATCC 700893 / DSM 11879 / JCM 9820 / NBRC 100138 / K1).